We begin with the raw amino-acid sequence, 273 residues long: Large ribosomal subunit protein uL2 (273 aa).

2 disordered regions span residues 32-53 (PLVEKNSKSGGRNNNGRITTRH) and 221-273 (RGTA…RRSK). Over residues 39-48 (KSGGRNNNGR) the composition is skewed to low complexity.

This sequence belongs to the universal ribosomal protein uL2 family. In terms of assembly, part of the 50S ribosomal subunit. Forms a bridge to the 30S subunit in the 70S ribosome.

Its function is as follows. One of the primary rRNA binding proteins. Required for association of the 30S and 50S subunits to form the 70S ribosome, for tRNA binding and peptide bond formation. It has been suggested to have peptidyltransferase activity; this is somewhat controversial. Makes several contacts with the 16S rRNA in the 70S ribosome. This is Large ribosomal subunit protein uL2 from Erwinia tasmaniensis (strain DSM 17950 / CFBP 7177 / CIP 109463 / NCPPB 4357 / Et1/99).